Here is a 319-residue protein sequence, read N- to C-terminus: GTP 3',8-cyclase (319 aa).

In terms of domain architecture, Radical SAM core spans 4–227 (KHGRKINYLR…VETEKSSTAL (224 aa)). R13 contacts GTP. [4Fe-4S] cluster contacts are provided by C20 and C24. Residue Y26 coordinates S-adenosyl-L-methionine. C27 is a binding site for [4Fe-4S] cluster. Residue R63 participates in GTP binding. G67 lines the S-adenosyl-L-methionine pocket. Residue T94 participates in GTP binding. Position 118 (S118) interacts with S-adenosyl-L-methionine. K155 is a GTP binding site. M189 is a binding site for S-adenosyl-L-methionine. [4Fe-4S] cluster is bound by residues C249 and C252. 254-256 (RVR) provides a ligand contact to GTP. Residue C266 coordinates [4Fe-4S] cluster.

This sequence belongs to the radical SAM superfamily. MoaA family. Monomer and homodimer. [4Fe-4S] cluster serves as cofactor.

The enzyme catalyses GTP + AH2 + S-adenosyl-L-methionine = (8S)-3',8-cyclo-7,8-dihydroguanosine 5'-triphosphate + 5'-deoxyadenosine + L-methionine + A + H(+). The protein operates within cofactor biosynthesis; molybdopterin biosynthesis. In terms of biological role, catalyzes the cyclization of GTP to (8S)-3',8-cyclo-7,8-dihydroguanosine 5'-triphosphate. The sequence is that of GTP 3',8-cyclase from Clostridium botulinum (strain ATCC 19397 / Type A).